The sequence spans 677 residues: Elongation factor G 2 (677 aa).

Positions 8-283 constitute a tr-type G domain; sequence SRIRNIGIIA…AVVNFLPSPE (276 aa). GTP is bound by residues 17–24, 81–85, and 135–138; these read AHIDAGKT, DTPGH, and NKMD.

The protein belongs to the TRAFAC class translation factor GTPase superfamily. Classic translation factor GTPase family. EF-G/EF-2 subfamily.

It localises to the cytoplasm. Functionally, catalyzes the GTP-dependent ribosomal translocation step during translation elongation. During this step, the ribosome changes from the pre-translocational (PRE) to the post-translocational (POST) state as the newly formed A-site-bound peptidyl-tRNA and P-site-bound deacylated tRNA move to the P and E sites, respectively. Catalyzes the coordinated movement of the two tRNA molecules, the mRNA and conformational changes in the ribosome. In Syntrophus aciditrophicus (strain SB), this protein is Elongation factor G 2.